An 872-amino-acid polypeptide reads, in one-letter code: Alanine--tRNA ligase (872 aa).

Residues H563, H567, C665, and H669 each coordinate Zn(2+).

This sequence belongs to the class-II aminoacyl-tRNA synthetase family. Requires Zn(2+) as cofactor.

Its subcellular location is the cytoplasm. It carries out the reaction tRNA(Ala) + L-alanine + ATP = L-alanyl-tRNA(Ala) + AMP + diphosphate. Functionally, catalyzes the attachment of alanine to tRNA(Ala) in a two-step reaction: alanine is first activated by ATP to form Ala-AMP and then transferred to the acceptor end of tRNA(Ala). Also edits incorrectly charged Ser-tRNA(Ala) and Gly-tRNA(Ala) via its editing domain. The chain is Alanine--tRNA ligase from Bacteroides fragilis (strain YCH46).